The primary structure comprises 386 residues: Homoserine O-succinyltransferase (386 aa).

The region spanning 49–358 is the AB hydrolase-1 domain; sequence NAILICHALS…DAEQGHDSFL (310 aa). Ser-156 (nucleophile) is an active-site residue. Arg-226 is a binding site for substrate. Active-site residues include Asp-321 and His-354. Asp-355 is a binding site for substrate.

Belongs to the AB hydrolase superfamily. MetX family. In terms of assembly, homodimer.

It localises to the cytoplasm. The enzyme catalyses L-homoserine + succinyl-CoA = O-succinyl-L-homoserine + CoA. It participates in amino-acid biosynthesis; L-methionine biosynthesis via de novo pathway; O-succinyl-L-homoserine from L-homoserine: step 1/1. Its function is as follows. Transfers a succinyl group from succinyl-CoA to L-homoserine, forming succinyl-L-homoserine. The sequence is that of Homoserine O-succinyltransferase from Acinetobacter baumannii (strain ACICU).